The following is a 234-amino-acid chain: Chalcone--flavanone isomerase 2 (234 aa).

3 residues coordinate substrate: T50, N115, and S192.

It belongs to the chalcone isomerase family.

It carries out the reaction a chalcone = a flavanone.. It participates in secondary metabolite biosynthesis; flavonoid biosynthesis. Functionally, catalyzes the intramolecular cyclization of bicyclic chalcones into tricyclic (S)-flavanones. Responsible for the isomerization of 4,2',4',6'-tetrahydroxychalcone (also termed chalcone) into naringenin. The chain is Chalcone--flavanone isomerase 2 (CHI2) from Vitis vinifera (Grape).